The sequence spans 85 residues: Large ribosomal subunit protein bL31B (85 aa).

Belongs to the bacterial ribosomal protein bL31 family. Type B subfamily. In terms of assembly, part of the 50S ribosomal subunit.

This Pseudomonas entomophila (strain L48) protein is Large ribosomal subunit protein bL31B.